The following is a 374-amino-acid chain: Formylglycine-generating enzyme (374 aa).

Residues 1–33 (MAAPALGPARGCGAELTLVLLLSLFLLLGWAAG) form the signal peptide. Cysteines 50 and 52 form a disulfide. Residues 57 to 102 (RPGAQGSSAAAHRYSREANAPGSVPGGRPSPPTKMVPIPAGVFTMG) form a disordered region. Glu-130 is a binding site for Ca(2+). An N-linked (GlcNAc...) asparagine glycan is attached at Asn-141. 2 disulfide bridges follow: Cys-218–Cys-365 and Cys-235–Cys-346. Ca(2+)-binding residues include Asn-259, Ile-260, Asp-273, Phe-275, Asn-293, Gly-296, Ala-298, and Glu-300. Residues Cys-336 and Cys-341 each contribute to the Cu(2+) site. Residues 341–360 (CYRYRCAARSQNTPDSSASN) are interaction with sulfatases.

The protein belongs to the sulfatase-modifying factor family. As to quaternary structure, monomer, homodimer and heterodimer with SUMF2. Cu(2+) serves as cofactor. Post-translationally, N-glycosylated. Contains high-mannose-type oligosaccharides.

It localises to the endoplasmic reticulum lumen. It carries out the reaction L-cysteinyl-[sulfatase] + 2 a thiol + O2 = an organic disulfide + 3-oxo-L-alanyl-[sulfatase] + hydrogen sulfide + H2O + H(+). The protein operates within protein modification; sulfatase oxidation. Functionally, oxidase that catalyzes the conversion of cysteine to 3-oxoalanine on target proteins, using molecular oxygen and an unidentified reducing agent. 3-oxoalanine modification, which is also named formylglycine (fGly), occurs in the maturation of arylsulfatases and some alkaline phosphatases that use the hydrated form of 3-oxoalanine as a catalytic nucleophile. Known substrates include GALNS, ARSA, STS and ARSE. In Bos taurus (Bovine), this protein is Formylglycine-generating enzyme.